A 345-amino-acid polypeptide reads, in one-letter code: tRNA N6-adenosine threonylcarbamoyltransferase (345 aa).

Residues His-109 and His-113 each contribute to the Fe cation site. Substrate is bound by residues 136-140 (TVSGG), Asp-169, Gly-182, Asp-186, and Asn-284. Asp-312 contacts Fe cation.

Belongs to the KAE1 / TsaD family. Requires Fe(2+) as cofactor.

Its subcellular location is the cytoplasm. It carries out the reaction L-threonylcarbamoyladenylate + adenosine(37) in tRNA = N(6)-L-threonylcarbamoyladenosine(37) in tRNA + AMP + H(+). Required for the formation of a threonylcarbamoyl group on adenosine at position 37 (t(6)A37) in tRNAs that read codons beginning with adenine. Is involved in the transfer of the threonylcarbamoyl moiety of threonylcarbamoyl-AMP (TC-AMP) to the N6 group of A37, together with TsaE and TsaB. TsaD likely plays a direct catalytic role in this reaction. The sequence is that of tRNA N6-adenosine threonylcarbamoyltransferase from Prosthecochloris aestuarii (strain DSM 271 / SK 413).